The sequence spans 98 residues: Tan_12Cys (98 aa).

A signal peptide spans 1–21; that stretch reads MNLKVLFLLAMVLVTLCLGED. The propeptide occupies 22-28; the sequence is RVTDRRK.

This sequence belongs to the teretoxin C (TC) superfamily. In terms of processing, contains 6 disulfide bonds. In terms of tissue distribution, expressed by the venom duct.

The protein localises to the secreted. The sequence is that of Tan_12Cys from Terebra anilis (Auger snail).